Consider the following 533-residue polypeptide: (E)-beta-farnesene synthase (533 aa).

Mg(2+) contacts are provided by D286, D290, N430, S434, and E438. The DDXXD motif signature appears at 286–290 (DDMMD).

This sequence belongs to the terpene synthase family. Mg(2+) is required as a cofactor. Co(2+) serves as cofactor. It depends on Mn(2+) as a cofactor.

It localises to the cytoplasm. It carries out the reaction (2E,6E)-farnesyl diphosphate = (E)-beta-farnesene + diphosphate. It participates in secondary metabolite biosynthesis; terpenoid biosynthesis. Sesquiterpene cyclase catalyzing the production of sixfold more beta-farnesene than alpha-bergamotene from farnesyl diphosphate. Involved in indirect defense by producing volatile signals attracting natural enemies of herbivores. The sequence is that of (E)-beta-farnesene synthase from Zea diploperennis (Diploperennial teosinte).